We begin with the raw amino-acid sequence, 303 residues long: Recombination-associated protein RdgC (303 aa).

The protein belongs to the RdgC family.

It is found in the cytoplasm. The protein resides in the nucleoid. In terms of biological role, may be involved in recombination. The protein is Recombination-associated protein RdgC of Yersinia pseudotuberculosis serotype O:1b (strain IP 31758).